The sequence spans 139 residues: Ribonuclease VapC36 (139 aa).

A PINc domain is found at 1 to 127 (MIVDTSAVVA…GNDFPQTDLE (127 aa)). Aspartate 4 and aspartate 100 together coordinate Mg(2+).

The protein belongs to the PINc/VapC protein family. Requires Mg(2+) as cofactor.

Functionally, toxic component of a type II toxin-antitoxin (TA) system. An RNase. Its cognate antitoxin is VapB36. This is Ribonuclease VapC36 from Mycobacterium tuberculosis (strain ATCC 25618 / H37Rv).